The sequence spans 350 residues: Fe(2+) transport protein 2 (350 aa).

Residues 1–21 (MATTKLVYILLILFTFTVSPA) form the signal peptide. Residues 22–47 (ISTAPEHCDSGFDNPCINKAKALPLK) are Extracellular-facing. A helical membrane pass occupies residues 48–68 (IVAIVAILTTSLIGVTSPLFS). Residues 69–80 (RYISFLRPDGNG) lie on the Cytoplasmic side of the membrane. The helical transmembrane segment at 81–101 (FMIVKCFSSGIILGTGFMHVL) threads the bilayer. At 102 to 120 (PDSFEMLSSKCLSDNPWHK) the chain is on the extracellular side. Residues 121–141 (FPFAGFVAMMSGLVTLAIDSI) form a helical membrane-spanning segment. Residues 142–195 (TTSLYTGKNSVGPVPDEEYGIDQEKAIHMVGHNHSHGHGVVLATKDDGQLLRYQ) are Cytoplasmic-facing. The helical transmembrane segment at 196 to 216 (VIAMVLEVGILFHSVVIGLSL) threads the bilayer. Residues 217-227 (GATNDSCTIKG) are Extracellular-facing. The helical transmembrane segment at 228 to 248 (LIIALCFHHLFEGIGLGGCIL) threads the bilayer. The Cytoplasmic segment spans residues 249–257 (QADFTNVKK). The chain crosses the membrane as a helical span at residues 258–278 (FLMAFFFTGTTPCGIFLGIAL). The Extracellular portion of the chain corresponds to 279–289 (SSIYRDNSPTA). The chain crosses the membrane as a helical span at residues 290 to 310 (LITIGLLNACSAGMLIYMALV). Topologically, residues 311 to 329 (DLLATEFMGSMLQGSIKLQ) are cytoplasmic. Residues 330–350 (IKCFTAALLGCAVMSVVAVWA) form a helical membrane-spanning segment.

Belongs to the ZIP transporter (TC 2.A.5) family. In terms of tissue distribution, expressed in the external cell layers of the root subapical zone.

The protein resides in the cell membrane. Functionally, high-affinity iron transporter that mediates under iron-deficiency the iron uptake from the rhizosphere across the plasma membrane in the root epidermal layer. Could also be capable of transporting zinc ions. This Arabidopsis thaliana (Mouse-ear cress) protein is Fe(2+) transport protein 2 (IRT2).